The sequence spans 156 residues: Small ribosomal subunit protein uS7 (156 aa).

This sequence belongs to the universal ribosomal protein uS7 family. Part of the 30S ribosomal subunit. Contacts proteins S9 and S11.

One of the primary rRNA binding proteins, it binds directly to 16S rRNA where it nucleates assembly of the head domain of the 30S subunit. Is located at the subunit interface close to the decoding center, probably blocks exit of the E-site tRNA. This Mycobacterium leprae (strain TN) protein is Small ribosomal subunit protein uS7.